A 259-amino-acid polypeptide reads, in one-letter code: Adenosylcobinamide-GDP ribazoletransferase (259 aa).

A run of 5 helical transmembrane segments spans residues 43 to 63 (LAGA…LGLG), 64 to 84 (ASSM…TGAL), 116 to 136 (FGVL…ASLV), 141 to 161 (PINV…LMVW), and 185 to 205 (TLYT…APVT).

It belongs to the CobS family. Mg(2+) is required as a cofactor.

It is found in the cell inner membrane. The catalysed reaction is alpha-ribazole + adenosylcob(III)inamide-GDP = adenosylcob(III)alamin + GMP + H(+). The enzyme catalyses alpha-ribazole 5'-phosphate + adenosylcob(III)inamide-GDP = adenosylcob(III)alamin 5'-phosphate + GMP + H(+). It participates in cofactor biosynthesis; adenosylcobalamin biosynthesis; adenosylcobalamin from cob(II)yrinate a,c-diamide: step 7/7. In terms of biological role, joins adenosylcobinamide-GDP and alpha-ribazole to generate adenosylcobalamin (Ado-cobalamin). Also synthesizes adenosylcobalamin 5'-phosphate from adenosylcobinamide-GDP and alpha-ribazole 5'-phosphate. In Allorhizobium ampelinum (strain ATCC BAA-846 / DSM 112012 / S4) (Agrobacterium vitis (strain S4)), this protein is Adenosylcobinamide-GDP ribazoletransferase.